A 1374-amino-acid polypeptide reads, in one-letter code: DNA-directed RNA polymerase subunit beta (1374 aa).

The protein belongs to the RNA polymerase beta chain family. As to quaternary structure, the RNAP catalytic core consists of 2 alpha, 1 beta, 1 beta' and 1 omega subunit. When a sigma factor is associated with the core the holoenzyme is formed, which can initiate transcription.

The catalysed reaction is RNA(n) + a ribonucleoside 5'-triphosphate = RNA(n+1) + diphosphate. Its function is as follows. DNA-dependent RNA polymerase catalyzes the transcription of DNA into RNA using the four ribonucleoside triphosphates as substrates. This Paracidovorax citrulli (strain AAC00-1) (Acidovorax citrulli) protein is DNA-directed RNA polymerase subunit beta.